We begin with the raw amino-acid sequence, 73 residues long: Mu-conotoxin PIIIA (73 aa).

An N-terminal signal peptide occupies residues 1-19; that stretch reads MSKLGVLLTICLLLFPITA. Positions 20–49 are excised as a propeptide; that stretch reads LPMDGDQPADRLAERMQDNISSEEHPFEKR. Gln-50 is subject to Pyrrolidone carboxylic acid. Disulfide bonds link Cys-53–Cys-65, Cys-53–Cys-70, Cys-54–Cys-70, Cys-54–Cys-71, Cys-60–Cys-65, and Cys-60–Cys-71. 4-hydroxyproline is present on Pro-57. The residue at position 67 (Pro-67) is a 4-hydroxyproline. Cysteine amide is present on Cys-71.

The protein belongs to the conotoxin M superfamily. 3D-structure of 3 disulfide-bond connectivities isomers is described (PIIIA-1 (C1-C5, C2-C6, C3-C4), PIIIA-2 (C1-C4, C2-C5, C3-C6) and PIIIA-3 (C1-C2, C3-C4, C5-C6)). Only PIIIA-2 contains the cysteine connectivity described as typical for native mu-conotoxins. However, PIIIA-1 is more potent than PIIIA-2, suggesting another possible disulfid connectivity. For this reason, both connectivities have been indicated in features. In terms of tissue distribution, expressed by the venom duct.

The protein localises to the secreted. Its function is as follows. Mu-conotoxins block voltage-gated sodium channels (Nav). This toxin potently blocks rNav1.4/SCN4A (IC(50)=36-41 nM). It also moderately blocks rNav1.1/SCN1A (IC(50)=120 nM), rNav1.2/SCN2A (IC(50)=620 nM), rNav1.3/SCN3A (IC(50)=3.2 uM), mNav1.6/SCN8A (IC(50)=100 nM). This inhibition is reversible. The block of Nav1.1, Nav1.2, and Nav1.6 is modified when beta-subunits are coexpressed with alpha subunits. Hence, blocks of channels containing the beta-1 and beta-3 subunits are more potent (compared to channels without beta subunits), whereas blocks of channels containing the beta-2 and beta-4 are less potent (compared to channels without beta subunits). In vivo, this peptide causes flaccid paralysis in both mice and fish. This chain is Mu-conotoxin PIIIA, found in Conus purpurascens (Purple cone).